The chain runs to 927 residues: Protein unc-45 homolog B (927 aa).

TPR repeat units follow at residues Pro4–Lys37, Ala41–Asp74, and Lys76–Asn108. 3 ARM repeats span residues Asp167–Thr206, Arg209–Asp248, and Asp746–Leu785.

Detected initially throughout the somites and the heart and gradually also expressed in the jaw, branchial arches and body wall muscles at later embryonic stages.

It is found in the cytoplasm. It localises to the myofibril. The protein localises to the sarcomere. The protein resides in the z line. Its subcellular location is the a band. It is found in the perinuclear region. It localises to the cytosol. Functionally, acts as a co-chaperone for HSP90 and is required for proper folding of the myosin motor domain. Plays a role in sarcomere formation during muscle cell development. Is necessary for normal early lens development. In Xenopus tropicalis (Western clawed frog), this protein is Protein unc-45 homolog B.